A 238-amino-acid polypeptide reads, in one-letter code: tRNA (guanine-N(7)-)-methyltransferase (238 aa).

S-adenosyl-L-methionine-binding residues include Glu68, Glu93, Asp120, and Asp143. The active site involves Asp143. Substrate is bound by residues Lys147, Asp179, and 216 to 219 (TKFE).

It belongs to the class I-like SAM-binding methyltransferase superfamily. TrmB family.

It catalyses the reaction guanosine(46) in tRNA + S-adenosyl-L-methionine = N(7)-methylguanosine(46) in tRNA + S-adenosyl-L-homocysteine. Its pathway is tRNA modification; N(7)-methylguanine-tRNA biosynthesis. Catalyzes the formation of N(7)-methylguanine at position 46 (m7G46) in tRNA. This Shewanella putrefaciens (strain CN-32 / ATCC BAA-453) protein is tRNA (guanine-N(7)-)-methyltransferase.